The sequence spans 145 residues: Flagellar assembly factor FliW (145 aa).

Belongs to the FliW family. Interacts with translational regulator CsrA and flagellin(s).

It localises to the cytoplasm. Acts as an anti-CsrA protein, binds CsrA and prevents it from repressing translation of its target genes, one of which is flagellin. Binds to flagellin and participates in the assembly of the flagellum. The chain is Flagellar assembly factor FliW from Clostridium tetani (strain Massachusetts / E88).